Reading from the N-terminus, the 679-residue chain is UvrABC system protein B (679 aa).

The Helicase ATP-binding domain maps to 31-414 (ENLTDGLAHQ…ELEKSGTEII (384 aa)). 44–51 (GVTGSGKT) contributes to the ATP binding site. Residues 97-120 (YYDYYQPEAYVPSSDTFIEKDASI) carry the Beta-hairpin motif. Residues 436–589 (QVDDLLSEAR…QIKYNEEHGI (154 aa)) enclose the Helicase C-terminal domain. Residues 639-674 (QQQIKKLEQQMYKFAQDLEFEKAAAIRDQLHQLREQ) enclose the UVR domain.

Belongs to the UvrB family. In terms of assembly, forms a heterotetramer with UvrA during the search for lesions. Interacts with UvrC in an incision complex.

The protein resides in the cytoplasm. The UvrABC repair system catalyzes the recognition and processing of DNA lesions. A damage recognition complex composed of 2 UvrA and 2 UvrB subunits scans DNA for abnormalities. Upon binding of the UvrA(2)B(2) complex to a putative damaged site, the DNA wraps around one UvrB monomer. DNA wrap is dependent on ATP binding by UvrB and probably causes local melting of the DNA helix, facilitating insertion of UvrB beta-hairpin between the DNA strands. Then UvrB probes one DNA strand for the presence of a lesion. If a lesion is found the UvrA subunits dissociate and the UvrB-DNA preincision complex is formed. This complex is subsequently bound by UvrC and the second UvrB is released. If no lesion is found, the DNA wraps around the other UvrB subunit that will check the other stand for damage. The sequence is that of UvrABC system protein B from Haemophilus influenzae (strain 86-028NP).